The sequence spans 122 residues: Large ribosomal subunit protein uL14 (122 aa).

Belongs to the universal ribosomal protein uL14 family. In terms of assembly, part of the 50S ribosomal subunit. Forms a cluster with proteins L3 and L19. In the 70S ribosome, L14 and L19 interact and together make contacts with the 16S rRNA in bridges B5 and B8.

In terms of biological role, binds to 23S rRNA. Forms part of two intersubunit bridges in the 70S ribosome. This Marinobacter nauticus (strain ATCC 700491 / DSM 11845 / VT8) (Marinobacter aquaeolei) protein is Large ribosomal subunit protein uL14.